Reading from the N-terminus, the 758-residue chain is Probable ubiquitin carboxyl-terminal hydrolase creB (758 aa).

Positions 1–27 (MGSFLRSFRRDVGSSTPSVGATPAKKE) are disordered. A USP domain is found at 57–468 (FGMENYGNTC…CAYVLFYQET (412 aa)). The active-site Nucleophile is Cys66. 2 disordered regions span residues 116 to 148 (AEAQ…DSSE) and 243 to 268 (QPIP…SKTP). Residues 253 to 268 (TTDSSRQSISSGSKTP) show a composition bias toward polar residues. His419 acts as the Proton acceptor in catalysis. A disordered region spans residues 514-744 (IPVQDEPQRH…KGDRAGHGKW (231 aa)). Pro residues predominate over residues 554–563 (ATPPPVPPIP). The stretch at 573–631 (KKSDIQSKKERAKEEKERKAAEKEMEKQRRKEQEARVKENQRREEAELKAALEASKASK) forms a coiled coil. Basic and acidic residues-rich tracts occupy residues 573-650 (KKSD…DPKR) and 729-740 (DALKSPKGDRAG).

It belongs to the peptidase C19 family. Interacts with creA, creC and qutD.

The catalysed reaction is Thiol-dependent hydrolysis of ester, thioester, amide, peptide and isopeptide bonds formed by the C-terminal Gly of ubiquitin (a 76-residue protein attached to proteins as an intracellular targeting signal).. Its function is as follows. Ubiquitin thioesterase component of the regulatory network controlling carbon source utilization through ubiquitination and deubiquitination involving creA, creB, creC, creD and acrB. Deubiquitinates the creA catabolic repressor and the quinate permease qutD. Also plays a role in response to carbon starvation and the control of extracellular proteases activity. This Aspergillus niger (strain ATCC MYA-4892 / CBS 513.88 / FGSC A1513) protein is Probable ubiquitin carboxyl-terminal hydrolase creB (creB).